Here is a 136-residue protein sequence, read N- to C-terminus: Large ribosomal subunit protein uL16 (136 aa).

Belongs to the universal ribosomal protein uL16 family. Part of the 50S ribosomal subunit.

Binds 23S rRNA and is also seen to make contacts with the A and possibly P site tRNAs. The chain is Large ribosomal subunit protein uL16 from Aliivibrio fischeri (strain ATCC 700601 / ES114) (Vibrio fischeri).